The sequence spans 98 residues: uncharacterized protein (98 aa).

This is an uncharacterized protein from Rickettsia prowazekii (strain Madrid E).